The primary structure comprises 209 residues: Large ribosomal subunit protein uL3 (209 aa).

The tract at residues 128 to 152 (QARGPMSHGSRYHRRPGSMGPVDPN) is disordered.

Belongs to the universal ribosomal protein uL3 family. In terms of assembly, part of the 50S ribosomal subunit. Forms a cluster with proteins L14 and L19.

In terms of biological role, one of the primary rRNA binding proteins, it binds directly near the 3'-end of the 23S rRNA, where it nucleates assembly of the 50S subunit. The protein is Large ribosomal subunit protein uL3 of Halalkalibacterium halodurans (strain ATCC BAA-125 / DSM 18197 / FERM 7344 / JCM 9153 / C-125) (Bacillus halodurans).